The following is a 473-amino-acid chain: Ribulose bisphosphate carboxylase large chain (473 aa).

Positions 1 to 2 (MS) are excised as a propeptide. Proline 3 is subject to N-acetylproline. Lysine 14 is modified (N6,N6,N6-trimethyllysine). Asparagine 123 and threonine 173 together coordinate substrate. Lysine 175 (proton acceptor) is an active-site residue. Lysine 177 provides a ligand contact to substrate. Mg(2+) contacts are provided by lysine 201, aspartate 203, and glutamate 204. Lysine 201 carries the post-translational modification N6-carboxylysine. Histidine 294 (proton acceptor) is an active-site residue. The substrate site is built by arginine 295, histidine 327, and serine 379.

It belongs to the RuBisCO large chain family. Type I subfamily. As to quaternary structure, heterohexadecamer of 8 large chains and 8 small chains; disulfide-linked. The disulfide link is formed within the large subunit homodimers. Mg(2+) serves as cofactor. In terms of processing, the disulfide bond which can form in the large chain dimeric partners within the hexadecamer appears to be associated with oxidative stress and protein turnover.

Its subcellular location is the plastid. It localises to the chloroplast. It catalyses the reaction 2 (2R)-3-phosphoglycerate + 2 H(+) = D-ribulose 1,5-bisphosphate + CO2 + H2O. The catalysed reaction is D-ribulose 1,5-bisphosphate + O2 = 2-phosphoglycolate + (2R)-3-phosphoglycerate + 2 H(+). RuBisCO catalyzes two reactions: the carboxylation of D-ribulose 1,5-bisphosphate, the primary event in carbon dioxide fixation, as well as the oxidative fragmentation of the pentose substrate in the photorespiration process. Both reactions occur simultaneously and in competition at the same active site. The protein is Ribulose bisphosphate carboxylase large chain of Ajuga chamaepitys (Yellow bugle).